The following is a 234-amino-acid chain: N-acetyl-alpha-D-glucosaminyl L-malate deacetylase 1 (234 aa).

Zn(2+) is bound by residues His-12, Asp-15, and His-113.

This sequence belongs to the PIGL family. It depends on Zn(2+) as a cofactor.

The enzyme catalyses (S)-malyl N-acetyl-alpha-D-glucosaminide + H2O = (S)-malyl alpha-D-glucosaminide + acetate. With respect to regulation, inhibited by BSH. Its function is as follows. Involved in bacillithiol (BSH) biosynthesis. Catalyzes the second step of the pathway, the deacetylation of N-acetylglucosaminylmalate (GlcNAc-Mal) to glucosamine malate (GlcN-Mal). This is N-acetyl-alpha-D-glucosaminyl L-malate deacetylase 1 from Bacillus anthracis.